A 368-amino-acid polypeptide reads, in one-letter code: Protein mab-21-like 3 (368 aa).

The protein belongs to the mab-21 family.

The sequence is that of Protein mab-21-like 3 (mab21L3) from Xenopus laevis (African clawed frog).